Consider the following 77-residue polypeptide: MAIFDDVKKVVVEQLSVDEDVVKMESKIIEDLGADSLDVVELVMALEEKFDVEIPDSDAEKLVKIEDVVNYIENLQK.

The region spanning 1 to 76 (MAIFDDVKKV…DVVNYIENLQ (76 aa)) is the Carrier domain. At Ser36 the chain carries O-(pantetheine 4'-phosphoryl)serine.

It belongs to the acyl carrier protein (ACP) family. 4'-phosphopantetheine is transferred from CoA to a specific serine of apo-ACP by AcpS. This modification is essential for activity because fatty acids are bound in thioester linkage to the sulfhydryl of the prosthetic group.

The protein resides in the cytoplasm. Its pathway is lipid metabolism; fatty acid biosynthesis. Functionally, carrier of the growing fatty acid chain in fatty acid biosynthesis. This Campylobacter lari (strain RM2100 / D67 / ATCC BAA-1060) protein is Acyl carrier protein.